Consider the following 390-residue polypeptide: 3,5-dihydroxyphenylacetyl-CoA synthase (390 aa).

Residue C173 is part of the active site.

It belongs to the thiolase-like superfamily. Chalcone/stilbene synthases family.

It carries out the reaction 4 malonyl-CoA + 4 H(+) = (3,5-dihydroxyphenyl)acetyl-CoA + 4 CO2 + 3 CoA + H2O. The protein operates within antibiotic biosynthesis; vancomycin biosynthesis. Functionally, involved in the biosynthesis of the nonproteinogenic amino acid monomer (S)-3,5-dihydroxyphenylglycine (Dpg) responsible of the production of vancomycin and teicoplanin antibiotics. Catalyzes the Claisen condensation of four molecules of malonyl-CoA to yield 3,5-dihydroxyphenylacetyl-CoA (DPA-CoA) and three free coenzyme A (CoA). DpgA requires the presence of the dehydratases DpgB and DpgD to facilitate the aromatization of the DPA-S-DgpA or DPA-S-CoA intermediate. This Streptomyces toyocaensis protein is 3,5-dihydroxyphenylacetyl-CoA synthase.